The following is a 313-amino-acid chain: Type II restriction enzyme BsuMI component YdiR (313 aa).

Residues 289-313 (FVSGDIVDENATTSSDDLPEDFENN) form a disordered region.

As to quaternary structure, bsuMI restriction activity requires YdiR, YdiS and YdjA.

It carries out the reaction Endonucleolytic cleavage of DNA to give specific double-stranded fragments with terminal 5'-phosphates.. In terms of biological role, a P subtype restriction enzyme that recognizes the double-stranded sequence 5'-CTCGAG-3'; the cleavage site is unknown. This is Type II restriction enzyme BsuMI component YdiR (ydiR) from Bacillus subtilis (strain 168).